An 89-amino-acid chain; its full sequence is Elongation factor 1-beta (89 aa).

It belongs to the EF-1-beta/EF-1-delta family.

Promotes the exchange of GDP for GTP in EF-1-alpha/GDP, thus allowing the regeneration of EF-1-alpha/GTP that could then be used to form the ternary complex EF-1-alpha/GTP/AAtRNA. The sequence is that of Elongation factor 1-beta from Methanosarcina acetivorans (strain ATCC 35395 / DSM 2834 / JCM 12185 / C2A).